Reading from the N-terminus, the 133-residue chain is Small ribosomal subunit protein uS8c (133 aa).

This sequence belongs to the universal ribosomal protein uS8 family. In terms of assembly, part of the 30S ribosomal subunit.

Its subcellular location is the plastid. It localises to the chloroplast. Its function is as follows. One of the primary rRNA binding proteins, it binds directly to 16S rRNA central domain where it helps coordinate assembly of the platform of the 30S subunit. The protein is Small ribosomal subunit protein uS8c (rps8) of Chlorokybus atmophyticus (Soil alga).